The sequence spans 175 residues: RNA pyrophosphohydrolase (175 aa).

Residues 6–149 (GYRPNVGIIL…KRQVYQQALT (144 aa)) enclose the Nudix hydrolase domain. The short motif at 38–59 (GGIKHGESPEQAMYRELYEEVG) is the Nudix box element.

The protein belongs to the Nudix hydrolase family. RppH subfamily. A divalent metal cation is required as a cofactor.

Functionally, accelerates the degradation of transcripts by removing pyrophosphate from the 5'-end of triphosphorylated RNA, leading to a more labile monophosphorylated state that can stimulate subsequent ribonuclease cleavage. The protein is RNA pyrophosphohydrolase of Azoarcus sp. (strain BH72).